The primary structure comprises 93 residues: Small ribosomal subunit protein bS20c (93 aa).

The protein belongs to the bacterial ribosomal protein bS20 family.

Its subcellular location is the plastid. It is found in the chloroplast. Its function is as follows. Binds directly to 16S ribosomal RNA. This Thalassiosira pseudonana (Marine diatom) protein is Small ribosomal subunit protein bS20c.